Consider the following 314-residue polypeptide: DNA-directed RNA polymerase subunit alpha (314 aa).

The interval Met1 to Thr228 is alpha N-terminal domain (alpha-NTD). Residues Lys245–Asp314 are alpha C-terminal domain (alpha-CTD).

It belongs to the RNA polymerase alpha chain family. As to quaternary structure, homodimer. The RNAP catalytic core consists of 2 alpha, 1 beta, 1 beta' and 1 omega subunit. When a sigma factor is associated with the core the holoenzyme is formed, which can initiate transcription.

The catalysed reaction is RNA(n) + a ribonucleoside 5'-triphosphate = RNA(n+1) + diphosphate. Functionally, DNA-dependent RNA polymerase catalyzes the transcription of DNA into RNA using the four ribonucleoside triphosphates as substrates. This Limosilactobacillus reuteri (strain DSM 20016) (Lactobacillus reuteri) protein is DNA-directed RNA polymerase subunit alpha.